The primary structure comprises 445 residues: Putative aldehyde dehydrogenase AldX (445 aa).

Residues Glu214 and Cys248 contribute to the active site.

It belongs to the aldehyde dehydrogenase family.

It carries out the reaction an aldehyde + NAD(+) + H2O = a carboxylate + NADH + 2 H(+). The sequence is that of Putative aldehyde dehydrogenase AldX (aldX) from Bacillus subtilis (strain 168).